Here is a 293-residue protein sequence, read N- to C-terminus: 4-hydroxy-tetrahydrodipicolinate synthase (293 aa).

Thr44 lines the pyruvate pocket. Tyr132 (proton donor/acceptor) is an active-site residue. The active-site Schiff-base intermediate with substrate is Lys161. Ile203 serves as a coordination point for pyruvate.

This sequence belongs to the DapA family. Homotetramer; dimer of dimers.

The protein localises to the cytoplasm. The catalysed reaction is L-aspartate 4-semialdehyde + pyruvate = (2S,4S)-4-hydroxy-2,3,4,5-tetrahydrodipicolinate + H2O + H(+). Its pathway is amino-acid biosynthesis; L-lysine biosynthesis via DAP pathway; (S)-tetrahydrodipicolinate from L-aspartate: step 3/4. In terms of biological role, catalyzes the condensation of (S)-aspartate-beta-semialdehyde [(S)-ASA] and pyruvate to 4-hydroxy-tetrahydrodipicolinate (HTPA). The protein is 4-hydroxy-tetrahydrodipicolinate synthase of Persephonella marina (strain DSM 14350 / EX-H1).